The following is a 221-amino-acid chain: Ribosomal RNA small subunit methyltransferase G (221 aa).

Residues Gly85, Phe90, 136-137 (AE), and Arg149 contribute to the S-adenosyl-L-methionine site.

Belongs to the methyltransferase superfamily. RNA methyltransferase RsmG family.

The protein localises to the cytoplasm. Specifically methylates the N7 position of a guanine in 16S rRNA. In Porphyromonas gingivalis (strain ATCC BAA-308 / W83), this protein is Ribosomal RNA small subunit methyltransferase G.